A 504-amino-acid chain; its full sequence is Cytochrome P450 7A1 (504 aa).

The helical transmembrane segment at 4–24 (TSLIWGIAIAACCCLWLILGI) threads the bilayer. Cys-444 contacts heme.

Belongs to the cytochrome P450 family. Heme is required as a cofactor. As to expression, detected in liver.

It is found in the endoplasmic reticulum membrane. The protein resides in the microsome membrane. It carries out the reaction cholesterol + reduced [NADPH--hemoprotein reductase] + O2 = 7alpha-hydroxycholesterol + oxidized [NADPH--hemoprotein reductase] + H2O + H(+). It catalyses the reaction 4beta-hydroxycholesterol + reduced [NADPH--hemoprotein reductase] + O2 = 4beta,7alpha-dihydroxycholesterol + oxidized [NADPH--hemoprotein reductase] + H2O + H(+). The enzyme catalyses lathosterol + reduced [NADPH--hemoprotein reductase] + O2 = 7alpha,8alpha-epoxy-5alpha-cholestan-3beta-ol + oxidized [NADPH--hemoprotein reductase] + H2O + H(+). The catalysed reaction is lathosterol + reduced [NADPH--hemoprotein reductase] + O2 = 5alpha-cholestan-7-oxo-3beta-ol + oxidized [NADPH--hemoprotein reductase] + H2O + H(+). It carries out the reaction 7-dehydrocholesterol + reduced [NADPH--hemoprotein reductase] + O2 = 7-oxocholesterol + oxidized [NADPH--hemoprotein reductase] + H2O + H(+). It catalyses the reaction (24S)-hydroxycholesterol + reduced [NADPH--hemoprotein reductase] + O2 = (24S)-7alpha-dihydroxycholesterol + oxidized [NADPH--hemoprotein reductase] + H2O + H(+). The enzyme catalyses (24R)-hydroxycholesterol + reduced [NADPH--hemoprotein reductase] + O2 = (24R)-7alpha-dihydroxycholesterol + oxidized [NADPH--hemoprotein reductase] + H2O + H(+). Its pathway is lipid metabolism; bile acid biosynthesis. It participates in steroid metabolism; cholesterol degradation. In terms of biological role, a cytochrome P450 monooxygenase involved in the metabolism of endogenous cholesterol and its oxygenated derivatives (oxysterols). Mechanistically, uses molecular oxygen inserting one oxygen atom into a substrate, and reducing the second into a water molecule, with two electrons provided by NADPH via cytochrome P450 reductase (CPR; NADPH-ferrihemoprotein reductase). Functions as a critical regulatory enzyme of bile acid biosynthesis and cholesterol homeostasis. Catalyzes the hydroxylation of carbon hydrogen bond at 7-alpha position of cholesterol, a rate-limiting step in cholesterol catabolism and bile acid biosynthesis. 7-alpha hydroxylates several oxysterols, including 4beta-hydroxycholesterol and 24-hydroxycholesterol. Catalyzes the oxidation of the 7,8 double bond of 7-dehydrocholesterol and lathosterol with direct and predominant formation of the 7-keto derivatives. The polypeptide is Cytochrome P450 7A1 (Homo sapiens (Human)).